We begin with the raw amino-acid sequence, 256 residues long: Phosphatidylglycerol--prolipoprotein diacylglyceryl transferase (256 aa).

The next 3 membrane-spanning stretches (helical) occupy residues 19-39, 56-76, and 91-111; these read VHWYGLMYLIGFIGAWLLGYW, LIFYSALGVILGGRVGYMLFY, and IWEGGMSFHGGLLGVVIAAWL. Arg-139 serves as a coordination point for a 1,2-diacyl-sn-glycero-3-phospho-(1'-sn-glycerol). Residues 231–251 form a helical membrane-spanning segment; it reads FGWLTMGQVLSIPMLLIGIWL.

The protein belongs to the Lgt family.

It is found in the cell inner membrane. It carries out the reaction L-cysteinyl-[prolipoprotein] + a 1,2-diacyl-sn-glycero-3-phospho-(1'-sn-glycerol) = an S-1,2-diacyl-sn-glyceryl-L-cysteinyl-[prolipoprotein] + sn-glycerol 1-phosphate + H(+). The protein operates within protein modification; lipoprotein biosynthesis (diacylglyceryl transfer). In terms of biological role, catalyzes the transfer of the diacylglyceryl group from phosphatidylglycerol to the sulfhydryl group of the N-terminal cysteine of a prolipoprotein, the first step in the formation of mature lipoproteins. This Legionella pneumophila (strain Corby) protein is Phosphatidylglycerol--prolipoprotein diacylglyceryl transferase.